A 218-amino-acid chain; its full sequence is DNA-directed RNA polymerase III subunit RPC7-like (218 aa).

The disordered stretch occupies residues 130-218 (TIILPKRPPK…SDDNMDEAIY (89 aa)). The segment covering 139-160 (KSTDDKEETIQKLETLEKKEEE) has biased composition (basic and acidic residues). 2 stretches are compositionally biased toward acidic residues: residues 161–193 (VTSEEDEEKEEEEEKEEGEEEEYDEEEHEEETD) and 201–218 (NGEDFGGDSDDNMDEAIY).

It belongs to the eukaryotic RPC7 RNA polymerase subunit family. In terms of assembly, component of the RNA polymerase III (Pol III) complex consisting of 17 subunits. Pol III exists as two alternative complexes defined by the mutually exclusive incorporation of subunit POLR3G/RPC7alpha or POLR3GL/RPC7beta. Found in a trimeric complex with POLR3C/RPC3 and POLR3F/RPC6. Directly interacts with POLR3C. Expressed in the liver.

Its subcellular location is the nucleus. Its function is as follows. DNA-dependent RNA polymerase catalyzes the transcription of DNA into RNA using the four ribonucleoside triphosphates as substrates. Specific peripheric component of RNA polymerase III which synthesizes small RNAs, such as 5S rRNA and tRNAs. This is DNA-directed RNA polymerase III subunit RPC7-like from Mus musculus (Mouse).